The primary structure comprises 700 residues: pH-response regulator protein palI/prr-5 (700 aa).

Topologically, residues 1 to 8 (MLRPATPL) are cytoplasmic. The helical transmembrane segment at 9–29 (AVLLFAAFGLLTLATISTPII) threads the bilayer. At 30–90 (KQIPLSSFEI…PRATRSTLSS (61 aa)) the chain is on the extracellular side. A helical transmembrane segment spans residues 91-111 (ILIVHPVAALITLINFVLAIV). The Cytoplasmic segment spans residues 112–123 (AHFHSPSHSARY). Residues 124-144 (LLILFIVSFVDFIVCLLCFLV) form a helical membrane-spanning segment. The Extracellular portion of the chain corresponds to 145-152 (DVLLFIPH). A helical membrane pass occupies residues 153–173 (LSWGSYIVVAATILVAFCGLV). Residues 174–700 (TCAMRRTLVN…GNMPRAAGPR (527 aa)) are Cytoplasmic-facing. Disordered stretches follow at residues 226-491 (SGAN…GIRD), 507-560 (VPDP…PISE), and 573-700 (DVDP…AGPR). The segment covering 234-252 (KLPEFTTFEKKDDRSEERI) has biased composition (basic and acidic residues). Over residues 320–378 (GRGGMPPGGYRGRGGFPGPGRGGGPPQNGRGGYGPPGRGRGGYGPPPRGYGGPGPRGGR) the composition is skewed to gly residues. The segment covering 414 to 424 (SPYANRQQSPG) has biased composition (polar residues). Composition is skewed to polar residues over residues 593–603 (SMQSPPASNSY) and 615–637 (ESEN…NSAN). A compositionally biased stretch (low complexity) spans 657 to 671 (VVPRRPVNRPGAGPA).

The protein belongs to the palI/RIM9 family.

Its subcellular location is the cell membrane. Its function is as follows. Required for the proteolytic cleavage of the transcription factor pacc-1 in response to alkaline ambient pH. The chain is pH-response regulator protein palI/prr-5 (prr-5) from Neurospora crassa (strain ATCC 24698 / 74-OR23-1A / CBS 708.71 / DSM 1257 / FGSC 987).